The primary structure comprises 407 residues: [Pyruvate dehydrogenase (acetyl-transferring)] kinase isozyme 2, mitochondrial (407 aa).

The Histidine kinase domain maps to 135 to 364; that stretch reads LEYKDTYGDD…DAVIYLKALS (230 aa). Phosphotyrosine occurs at positions 215 and 216. ATP is bound by residues 251–258, Asp290, 309–310, and 325–330; these read ELFKNAMR, ST, and GFGYGL. Residue Lys376 is modified to N6-succinyllysine.

It belongs to the PDK/BCKDK protein kinase family. As to quaternary structure, homodimer, and heterodimer with PDK1. Interacts with the pyruvate dehydrogenase complex subunit DLAT, and is part of the multimeric pyruvate dehydrogenase complex that contains multiple copies of pyruvate dehydrogenase (E1), dihydrolipoamide acetyltransferase (DLAT, E2) and lipoamide dehydrogenase (DLD, E3). As to expression, detected in heart (at protein level).

It localises to the mitochondrion matrix. The catalysed reaction is L-seryl-[pyruvate dehydrogenase E1 alpha subunit] + ATP = O-phospho-L-seryl-[pyruvate dehydrogenase E1 alpha subunit] + ADP + H(+). Kinase that plays a key role in the regulation of glucose and fatty acid metabolism and homeostasis via phosphorylation of the pyruvate dehydrogenase subunits PDHA1 and PDHA2. This inhibits pyruvate dehydrogenase activity, and thereby regulates metabolite flux through the tricarboxylic acid cycle, down-regulates aerobic respiration and inhibits the formation of acetyl-coenzyme A from pyruvate. Inhibition of pyruvate dehydrogenase decreases glucose utilization and increases fat metabolism. Mediates cellular responses to insulin. Plays an important role in maintaining normal blood glucose levels and in metabolic adaptation to nutrient availability. Via its regulation of pyruvate dehydrogenase activity, plays an important role in maintaining normal blood pH and in preventing the accumulation of ketone bodies under starvation. Plays a role in the regulation of cell proliferation and in resistance to apoptosis under oxidative stress. Plays a role in p53/TP53-mediated apoptosis. This chain is [Pyruvate dehydrogenase (acetyl-transferring)] kinase isozyme 2, mitochondrial (Pdk2), found in Mus musculus (Mouse).